The following is a 465-amino-acid chain: Hepatocyte nuclear factor 6 (465 aa).

Disordered stretches follow at residues 17–55 (SHEPVPAPADLLGGSPHARSSVAHRGSHLPPAHPRSMGM), 120–141 (DKFPHHHHHHHHHHHPHHHQRL), 264–290 (LLGTAREPNPSVTGAQVSNGSNSGQME), and 442–465 (DKWQDEGSSNSGNSSSSSSTCTKA). A compositionally biased stretch (basic residues) spans 123–140 (PHHHHHHHHHHHPHHHQR). Over residues 273–288 (PSVTGAQVSNGSNSGQ) the composition is skewed to polar residues. The segment at residues 283-369 (GSNSGQMEEI…QRMSALRLAA (87 aa)) is a DNA-binding region (CUT). A DNA-binding region (homeobox) is located at residues 385-444 (PKKPRLVFTDVQRRTLHAIFKENKRPSKELQITISQQLGLELSTVSNFFMNARRRSLDKW). Over residues 448 to 465 (GSSNSGNSSSSSSTCTKA) the composition is skewed to low complexity.

The protein belongs to the CUT homeobox family. As to quaternary structure, binds DNA as a monomer. Highly expressed in liver; lower expression in testis and skin.

Its subcellular location is the nucleus. Functionally, transcriptional activator. Binds the consensus sequence 5'-DHWATTGAYTWWD-3' on a variety of gene promoters such as those of HNF3B and TTR. Important for liver genes transcription. This is Hepatocyte nuclear factor 6 (ONECUT1) from Homo sapiens (Human).